Consider the following 369-residue polypeptide: Sesquiterpene cyclase hepA (369 aa).

Residues Asp100, Asn248, Ser252, and Asp256 each coordinate Mg(2+). The DDXXD motif motif lies at 100–104 (DDEID). A (N,D)D(L,I,V)X(S,T)XXXE motif motif is present at residues 255–262 (NDLLSLRK).

It belongs to the terpene synthase family. It depends on Mg(2+) as a cofactor.

Sesquiterpene cyclase; part of the gene cluster that mediates the biosynthesis of heptelidic acid (HA), a sesquiterpene lactone that acts as an inhibitor of glyceraldehyde-3-phosphatedehydrogenase (GAPDH) and a growth inhibitor of the salt-tolerant lactic acid bacteria in soy sauce brewing. This Aspergillus oryzae (strain ATCC 42149 / RIB 40) (Yellow koji mold) protein is Sesquiterpene cyclase hepA.